We begin with the raw amino-acid sequence, 496 residues long: Glycerol kinase (496 aa).

Thr-12 is an ADP binding site. 3 residues coordinate ATP: Thr-12, Thr-13, and Ser-14. Thr-12 is a sn-glycerol 3-phosphate binding site. Position 16 (Arg-16) interacts with ADP. Sn-glycerol 3-phosphate-binding residues include Arg-82, Glu-83, and Tyr-134. The glycerol site is built by Arg-82, Glu-83, and Tyr-134. His-230 carries the post-translational modification Phosphohistidine; by HPr. A sn-glycerol 3-phosphate-binding site is contributed by Asp-244. Glycerol is bound by residues Asp-244 and Gln-245. Residues Thr-266 and Gly-309 each coordinate ADP. Thr-266, Gly-309, Gln-313, and Gly-410 together coordinate ATP. The ADP site is built by Gly-410 and Asn-414.

The protein belongs to the FGGY kinase family. In terms of assembly, homotetramer and homodimer (in equilibrium). In terms of processing, the phosphoenolpyruvate-dependent sugar phosphotransferase system (PTS), including enzyme I, and histidine-containing protein (HPr) are required for the phosphorylation, which leads to the activation of the enzyme.

It catalyses the reaction glycerol + ATP = sn-glycerol 3-phosphate + ADP + H(+). The protein operates within polyol metabolism; glycerol degradation via glycerol kinase pathway; sn-glycerol 3-phosphate from glycerol: step 1/1. Its activity is regulated as follows. Activated by phosphorylation and inhibited by fructose 1,6-bisphosphate (FBP). Functionally, key enzyme in the regulation of glycerol uptake and metabolism. Catalyzes the phosphorylation of glycerol to yield sn-glycerol 3-phosphate. The protein is Glycerol kinase of Bacillus cereus (strain G9842).